We begin with the raw amino-acid sequence, 200 residues long: NADH-quinone oxidoreductase subunit C (200 aa).

The protein belongs to the complex I 30 kDa subunit family. In terms of assembly, NDH-1 is composed of 14 different subunits. Subunits NuoB, C, D, E, F, and G constitute the peripheral sector of the complex.

It is found in the cell inner membrane. The enzyme catalyses a quinone + NADH + 5 H(+)(in) = a quinol + NAD(+) + 4 H(+)(out). In terms of biological role, NDH-1 shuttles electrons from NADH, via FMN and iron-sulfur (Fe-S) centers, to quinones in the respiratory chain. The immediate electron acceptor for the enzyme in this species is believed to be ubiquinone. Couples the redox reaction to proton translocation (for every two electrons transferred, four hydrogen ions are translocated across the cytoplasmic membrane), and thus conserves the redox energy in a proton gradient. The sequence is that of NADH-quinone oxidoreductase subunit C from Ralstonia pickettii (strain 12J).